We begin with the raw amino-acid sequence, 744 residues long: Cell division cycle protein 27 homolog B (744 aa).

The stretch at 101-134 is one TPR 1 repeat; sequence AAGHYLLGLIYKYTDRRKNAAQQFKQSLTIDPLL. Positions 180–199 are enriched in polar residues; the sequence is NEERNSTSTKNTSSEDYSPR. Disordered stretches follow at residues 180–218 and 359–390; these read NEERNSTSTKNTSSEDYSPRQSKHTQSHGLKDISGNFHS and ENMDEGVRGEPFDDSRPNTASTTGSMASNDQE. Positions 363–374 are enriched in basic and acidic residues; it reads EGVRGEPFDDSR. Residues 375-387 show a composition bias toward polar residues; that stretch reads PNTASTTGSMASN. TPR repeat units follow at residues 450 to 483, 518 to 551, 553 to 585, 587 to 619, 621 to 653, 655 to 687, and 688 to 721; these read GWVLSQVGKAYFELIDYLEAEKAFRLARLASPYC, PQSWCAMGNCYSLQKDHETALKNFLRAVQLNPRF, YAHTLCGHEYTTLEDFENGMKSYQNALRVDTRH, NAWYGLGMIYLRQEKLEFSEHHFRMAFLINPSS, VIMSYLGTSLHALKRSEEALEIMEQAIVADRKN, LPMYQKANILVCLERLDEALEVLEELKEYAPSE, and SSVYALMGRIYKRRNMHDKAMLHFGLALDMKPPA.

It belongs to the APC3/CDC27 family. The APC/C is composed of at least 10 subunits. Can homodimerize. Interacts with APC2, APC10, FZR2 and FZR3. Interacts with PANS1. Interacts with SAMBA. In terms of tissue distribution, specifically expressed in dividing and elongating cells.

It localises to the nucleus. Its pathway is protein modification; protein ubiquitination. In terms of biological role, component of the anaphase promoting complex/cyclosome (APC/C), a cell cycle-regulated E3 ubiquitin-protein ligase complex that controls progression through mitosis and the G1 phase of the cell cycle. The APC/C complex controls several key steps in the cell cycle by mediating ubiquitination and subsequent degradation of target proteins such as cyclins. The APC/C complex is required for the female gametophyte development and is involved in several aspect of development by controlling cell division and cell elongation. Involved in the control of endoreduplication. Functionally redundant with CDC27A in the control of gametophyte development. The sequence is that of Cell division cycle protein 27 homolog B (CDC27B) from Arabidopsis thaliana (Mouse-ear cress).